Reading from the N-terminus, the 282-residue chain is MGRSPCCEKAHTNKGAWTKEEDERLVAYIKAHGEGCWRSLPKAAGLLRCGKSCRLRWINYLRPDLKRGNFTEEEDELIIKLHSLLGNKWSLIAGRLPGRTDNEIKNYWNTHIRRKLINRGIDPTSHRPIQESSASQDSKPTQLEPVTSNTINISFTSAPKVETFHESISFPGKSEKISMLTFKEEKDECPVQEKFPDLNLELRISLPDDVDRLQGHGKSTTPRCFKCSLGMINGMECRCGRMRCDVVGGSSKGSDMSNGFDFLGLAKKETTSLLGFRSLEMK.

HTH myb-type domains follow at residues lysine 9–leucine 61 and arginine 62–leucine 116. 2 DNA-binding regions (H-T-H motif) span residues tryptophan 37 to leucine 61 and tryptophan 89 to isoleucine 112. Positions arginine 119–proline 145 are disordered. Over residues glutamine 130–proline 145 the composition is skewed to polar residues.

In terms of assembly, interacts with BHLH12/MYC1 and BHLH42/TT8. Interacts with SAD2. In terms of tissue distribution, widely expressed at low level. Highly expressed in siliques. Weakly expressed in seedlings, young and mature leaves, cauline leaves, stems, flower buds and roots.

Its subcellular location is the nucleus. Transcription repressor involved in regulation of protection against UV. Mediates transcriptional repression of CYP73A5, the gene encoding trans-cinnamate 4-monooxygenase, thereby regulating the accumulation of the UV-protectant compound sinapoylmalate. The sequence is that of Transcription repressor MYB4 (MYB4) from Arabidopsis thaliana (Mouse-ear cress).